Here is a 65-residue protein sequence, read N- to C-terminus: Large ribosomal subunit protein bL35 (65 aa).

Residues Met1–Ala10 are compositionally biased toward basic residues. Residues Met1 to Thr21 form a disordered region.

The protein belongs to the bacterial ribosomal protein bL35 family.

The protein is Large ribosomal subunit protein bL35 of Polynucleobacter necessarius subsp. necessarius (strain STIR1).